We begin with the raw amino-acid sequence, 129 residues long: uncharacterized protein (129 aa).

2 helical membrane passes run 4–24 and 37–57; these read FKFLKCVYLCFMVFVRLILII and VISLLFIILTFLLILGCDLSI.

The protein to B.burgdorferi BBF20.

The protein localises to the cell membrane. This is an uncharacterized protein from Borreliella burgdorferi (strain ATCC 35210 / DSM 4680 / CIP 102532 / B31) (Borrelia burgdorferi).